The sequence spans 471 residues: Alpha-galactosidase (471 aa).

An N-terminal signal peptide occupies residues 1–18 (MFLLYLFTSFAAVSGVLG). Residues Cys42 and Cys74 are joined by a disulfide bond. Substrate is bound by residues Asp72 and Asp73. Residue Asn82 is glycosylated (N-linked (GlcNAc...) asparagine). The cysteines at positions 121 and 151 are disulfide-linked. Residue Lys147 participates in substrate binding. Asp149 serves as the catalytic Nucleophile. Asn175 carries N-linked (GlcNAc...) asparagine glycosylation. Arg205 lines the substrate pocket. The Proton donor role is filled by Asp209. 2 cysteine pairs are disulfide-bonded: Cys221–Cys237 and Cys223–Cys230. Gln251 is a binding site for substrate. 7 N-linked (GlcNAc...) asparagine glycosylation sites follow: Asn270, Asn403, Asn412, Asn417, Asn422, Asn435, and Asn454.

The protein belongs to the glycosyl hydrolase 27 family. Homotetramer.

Its subcellular location is the secreted. The enzyme catalyses Hydrolysis of terminal, non-reducing alpha-D-galactose residues in alpha-D-galactosides, including galactose oligosaccharides, galactomannans and galactolipids.. In Saccharomyces pastorianus (strain ATCC 76529 / Carlsberg bottom yeast no.1 / CBS 1513 / CLIB 176 / NBRC 1167 / NCYC 396 / NRRL Y-12693) (Saaz-type lager yeast), this protein is Alpha-galactosidase (MEL).